The chain runs to 376 residues: Non-structural protein NS2 (376 aa).

The segment covering 163–188 (EEREKGAVEQPHKPAFKTERGMNRPD) has biased composition (basic and acidic residues). The interval 163–201 (EEREKGAVEQPHKPAFKTERGMNRPDSDEDQNPAGGVVN) is disordered.

This sequence belongs to the orbivirus non-structural protein NS2 family.

In terms of biological role, single-stranded RNA-binding protein. This is Non-structural protein NS2 (Segment-8) from Antilocapra americana (Pronghorn).